We begin with the raw amino-acid sequence, 100 residues long: Small ubiquitin-related modifier 1 (100 aa).

The segment covering Met-1–Ala-12 has biased composition (basic and acidic residues). The tract at residues Met-1–Leu-23 is disordered. Residues Ala-19–Gly-96 form the Ubiquitin-like domain. Residue Gly-96 forms a Glycyl lysine isopeptide (Gly-Lys) (interchain with K-? in acceptor proteins) linkage.

This sequence belongs to the ubiquitin family. SUMO subfamily. As to quaternary structure, interacts with SAE2, SCE1 and SIZ1. Covalently attached to a number of proteins.

It is found in the nucleus. Its subcellular location is the cytoplasm. Functionally, ubiquitin-like protein which can be covalently attached to target lysines as a monomer. Does not seem to be involved in protein degradation and may function as an antagonist of ubiquitin in the degradation process. This is Small ubiquitin-related modifier 1 (SUMO1) from Oryza sativa subsp. japonica (Rice).